Reading from the N-terminus, the 634-residue chain is ATP-dependent zinc metalloprotease FtsH (634 aa).

The Cytoplasmic portion of the chain corresponds to 1–5 (MNALK). The helical transmembrane segment at 6-26 (NFFIWAIIIGAAIVAFNLFEG) threads the bilayer. Residues 27 to 100 (KREFTTKVSL…VANPEPPGGW (74 aa)) are Periplasmic-facing. Residues 101–121 (LVNVFLSWLPILFFIGIWIFL) traverse the membrane as a helical segment. Residues 122–634 (LRQMSGGGNV…KSEEVKEEVV (513 aa)) lie on the Cytoplasmic side of the membrane. 195-202 (GEPGVGKT) is a binding site for ATP. Residue His-418 coordinates Zn(2+). Glu-419 is a catalytic residue. His-422 and Asp-496 together coordinate Zn(2+). Positions 615–634 (DRKSEENKELKSEEVKEEVV) are disordered.

In the central section; belongs to the AAA ATPase family. It in the C-terminal section; belongs to the peptidase M41 family. As to quaternary structure, the isolated protease domain (residues 405-634) forms a stable hexamer. It depends on Zn(2+) as a cofactor.

It is found in the cell inner membrane. Acts as a processive, ATP-dependent zinc metallopeptidase for both cytoplasmic and membrane proteins. Plays a role in the quality control of integral membrane proteins. The sequence is that of ATP-dependent zinc metalloprotease FtsH from Aquifex aeolicus (strain VF5).